The chain runs to 1620 residues: Putative zinc carboxypeptidase (1620 aa).

Topologically, residues 1–1367 are extracellular; that stretch reads MLFKNEDSGN…SYDFLYFDEN (1367 aa). A glycan (N-linked (GlcNAc...) asparagine) is linked at Asn19. Residues 32–74 form a disordered region; it reads RNDNKNNDNEDNKQDDEEKNDEDDNKSNLLLEENEENKRQGDK. A compositionally biased stretch (basic and acidic residues) spans 33-43; that stretch reads NDNKNNDNEDN. The segment covering 44–55 has biased composition (acidic residues); the sequence is KQDDEEKNDEDD. N-linked (GlcNAc...) asparagine glycans are attached at residues Asn56 and Asn102. Positions 309–328 are disordered; that stretch reads GNHYDAHESTNTYDEEKTRE. N-linked (GlcNAc...) asparagine glycans are attached at residues Asn354, Asn487, Asn508, Asn529, Asn550, Asn571, Asn589, Asn687, Asn802, and Asn1010. The segment at 497-559 is possible malaria epitope; the sequence is VNNLDSTVNY…NSTGNNINNI (63 aa). One can recognise a Peptidase M14 domain in the interval 1004–1261; that stretch reads GENKKNNGTK…FYVQNYFEGY (258 aa). Residues His1059 and Glu1062 each coordinate Zn(2+). N-linked (GlcNAc...) asparagine glycosylation is found at Asn1064 and Asn1141. Zn(2+) is bound at residue His1155. Glu1229 acts as the Proton donor/acceptor in catalysis. Residues 1279–1329 form a disordered region; it reads NIKGDDNINGDDNIKGGDNIKGDDNIKRDDNFQRDDNFQRDDNFQRGDNFH. A helical membrane pass occupies residues 1368 to 1388; sequence LLFMTGVSFGICLFKFINFLS. At 1389 to 1620 the chain is on the cytoplasmic side; the sequence is YHKSSICRRT…SKRKKVIVIL (232 aa). Positions 1560-1620 are disordered; sequence PNGKYKGPGF…SKRKKVIVIL (61 aa). Residues 1581 to 1597 show a composition bias toward basic and acidic residues; the sequence is NKNESKTEKKSKTENKS. The span at 1598–1620 shows a compositional bias: basic residues; the sequence is KSKSKNKSKSKNKSKRKKVIVIL.

This sequence belongs to the peptidase M14 family. The cofactor is Zn(2+).

It localises to the membrane. In Plasmodium falciparum (isolate 3D7), this protein is Putative zinc carboxypeptidase.